A 146-amino-acid chain; its full sequence is Calmodulin-like protein 5 (146 aa).

The residue at position 2 (alanine 2) is an N-acetylalanine. EF-hand domains are found at residues glutamate 8 to asparagine 43, leucine 44 to lysine 74, alanine 78 to proline 113, and leucine 114 to glutamate 146. Ca(2+)-binding residues include aspartate 21, aspartate 23, asparagine 25, threonine 27, glutamate 32, aspartate 57, aspartate 59, aspartate 61, glutamate 63, glutamate 68, aspartate 91, aspartate 93, aspartate 95, histidine 97, glutamate 102, aspartate 127, aspartate 129, aspartate 131, arginine 133, and glutamate 138.

Associates with transglutaminase 3. Particularly abundant in the epidermis where its expression is directly related to keratinocyte differentiation. Very low expression in lung.

Binds calcium. May be involved in terminal differentiation of keratinocytes. The polypeptide is Calmodulin-like protein 5 (CALML5) (Homo sapiens (Human)).